A 1184-amino-acid polypeptide reads, in one-letter code: Non-receptor tyrosine-protein kinase TYK2 (1184 aa).

Residues 33-430 (LMVLLHWPGP…GYFRLTADSS (398 aa)) enclose the FERM domain. The interval 294–368 (CYIQNSGQTA…KAGEHLTESP (75 aa)) is disordered. A Phosphotyrosine modification is found at Tyr295. An SH2; atypical domain is found at 449 to 529 (GIHGPLMDPF…GRSFASLGDL (81 aa)). Ser525 bears the Phosphoserine mark. The Protein kinase 1 domain occupies 589–866 (ITQLSHLGQG…RTILRDLTRL (278 aa)). Tyr604 is subject to Phosphotyrosine. A Phosphoserine modification is found at Ser881. A Protein kinase 2 domain is found at 894 to 1166 (LKKIRDLGEG…PTFQNLVPIL (273 aa)). Residues 900–908 (LGEGHFGKV) and Lys927 each bind ATP. Asp1020 (proton acceptor) is an active-site residue. A Phosphotyrosine; by autocatalysis modification is found at Tyr1051. Tyr1052 carries the phosphotyrosine modification.

It belongs to the protein kinase superfamily. Tyr protein kinase family. JAK subfamily. Interacts (via FERM domain) with JAKMIP1. Interacts with PIK3R1; this interaction is important for cell migration. Interacts with MPL/TPOR. Post-translationally, phosphorylation by JAK1 at Tyr-1051 and Tyr-1052 induces kinase activation.

The enzyme catalyses L-tyrosyl-[protein] + ATP = O-phospho-L-tyrosyl-[protein] + ADP + H(+). The protein kinase 1 domain (also termed pseudokinase domain) mediates autoinhibition of the TYK2 kinase domain. Tyrosine kinase of the non-receptor type involved in numerous cytokines and interferons signaling, which regulates cell growth, development, cell migration, innate and adaptive immunity. Plays both structural and catalytic roles in numerous interleukins and interferons (IFN-alpha/beta) signaling. Associates with heterodimeric cytokine receptor complexes and activates STAT family members including STAT1, STAT3, STAT4 or STAT6. The heterodimeric cytokine receptor complexes are composed of (1) a TYK2-associated receptor chain (IFNAR1, IL12RB1, IL10RB or IL13RA1), and (2) a second receptor chain associated either with JAK1 or JAK2. In response to cytokine-binding to receptors, phosphorylates and activates receptors (IFNAR1, IL12RB1, IL10RB or IL13RA1), creating docking sites for STAT members. In turn, recruited STATs are phosphorylated by TYK2 (or JAK1/JAK2 on the second receptor chain), form homo- and heterodimers, translocate to the nucleus, and regulate cytokine/growth factor responsive genes. Negatively regulates STAT3 activity by promototing phosphorylation at a specific tyrosine that differs from the site used for signaling. This Mus musculus (Mouse) protein is Non-receptor tyrosine-protein kinase TYK2.